We begin with the raw amino-acid sequence, 232 residues long: Protein TIFY 10c (232 aa).

A disordered region spans residues 54-73 (PPAAGAGGAFRPPPTTMNLL). Residues 114-149 (AGEKAQQLTIFYGGKVVVFENFPSTKVKDLLQIVST) enclose the Tify domain. The tract at residues 152–177 (GVDKNTGTAATQSLPRPAHNSLPDLP) is disordered. A compositionally biased stretch (polar residues) spans 156 to 165 (NTGTAATQSL). The Jas signature appears at 177 to 202 (PIARRNSLHRFLEKRKGRMNANAPYQ). Residues 179–186 (ARRNSLHR) carry the Nuclear localization signal motif.

It belongs to the TIFY/JAZ family. Interacts with BHLH148. Interacts with COI1B in a coronatine-dependent manner. Coronatine is an analog of jasmonoyl isoleucine (JA-Ile). Interacts with TIFY5/JAZ2, TIFY6B/JAZ4, TIFY9/JAZ5, TIFY11A, TIFY11D/JAZ12, TIFY11G/JAZ15 and NINJA1. Ubiquitinated. Increase in jasmonoyl isoleucine (JA-Ile) levels mediates its degradation via COI1B-mediated proteasome pathway.

The protein localises to the nucleus. It localises to the cytoplasm. Its subcellular location is the cytosol. Its function is as follows. Repressor of jasmonate (JA) responses. Acts as a repressor of JA-induced resistance to the bacterial blight pathogen Xanthomonas oryzae pv. oryzae (Xoo). Regulates JA-induced accumulation of linalool at the transcriptional level of linalool synthase gene LIS. Linalool is important for resistance to bacterial blight pathogen Xoo. The sequence is that of Protein TIFY 10c from Oryza sativa subsp. japonica (Rice).